The sequence spans 189 residues: Putative dihydrofolate reductase (189 aa).

Residues 3-185 enclose the DHFR domain; that stretch reads KMNLIVAMDA…LKFEFCKWKV (183 aa). Residues A9 and 15 to 21 contribute to the NADP(+) site; that span reads GIGKNGV. 29-34 serves as a coordination point for substrate; that stretch reads DMQYFA. Residue 53 to 55 coordinates NADP(+); it reads RKC. Substrate is bound at residue R69. Residues 75 to 77 and 115 to 122 each bind NADP(+); these read SRQ and GGAEIYDL.

This sequence belongs to the dihydrofolate reductase family.

It catalyses the reaction (6S)-5,6,7,8-tetrahydrofolate + NADP(+) = 7,8-dihydrofolate + NADPH + H(+). It functions in the pathway cofactor biosynthesis; tetrahydrofolate biosynthesis; 5,6,7,8-tetrahydrofolate from 7,8-dihydrofolate: step 1/1. Key enzyme in folate metabolism. Catalyzes an essential reaction for de novo glycine and purine synthesis, and for DNA precursor synthesis. The polypeptide is Putative dihydrofolate reductase (dhfr-1) (Caenorhabditis elegans).